The primary structure comprises 262 residues: Hydroxyethylthiazole kinase (262 aa).

M50 serves as a coordination point for substrate. Residues R125 and T171 each coordinate ATP. G198 serves as a coordination point for substrate.

The protein belongs to the Thz kinase family. It depends on Mg(2+) as a cofactor.

The catalysed reaction is 5-(2-hydroxyethyl)-4-methylthiazole + ATP = 4-methyl-5-(2-phosphooxyethyl)-thiazole + ADP + H(+). The protein operates within cofactor biosynthesis; thiamine diphosphate biosynthesis; 4-methyl-5-(2-phosphoethyl)-thiazole from 5-(2-hydroxyethyl)-4-methylthiazole: step 1/1. Its function is as follows. Catalyzes the phosphorylation of the hydroxyl group of 4-methyl-5-beta-hydroxyethylthiazole (THZ). In Citrobacter koseri (strain ATCC BAA-895 / CDC 4225-83 / SGSC4696), this protein is Hydroxyethylthiazole kinase.